Here is a 222-residue protein sequence, read N- to C-terminus: Glutathione-specific gamma-glutamylcyclotransferase 1 (222 aa).

The disordered stretch occupies residues 1–25 (MKQESAAQSTPPPSLSPAPSAQPSW). Residue 35–40 (IFGYGS) participates in substrate binding. The Proton acceptor role is filled by glutamate 115.

It belongs to the gamma-glutamylcyclotransferase family. ChaC subfamily. As to quaternary structure, interacts with NOTCH1 (via extracellular region).

It localises to the cytoplasm. Its subcellular location is the cytosol. The protein resides in the golgi apparatus. The protein localises to the trans-Golgi network. The enzyme catalyses glutathione = L-cysteinylglycine + 5-oxo-L-proline. Functionally, catalyzes the cleavage of glutathione into 5-oxo-L-proline and a Cys-Gly dipeptide. Acts specifically on glutathione, but not on other gamma-glutamyl peptides. Glutathione depletion is an important factor for apoptosis initiation and execution. Acts as a pro-apoptotic component of the unfolded protein response pathway by mediating the pro-apoptotic effects of the ATF4-ATF3-DDIT3/CHOP cascade. Negative regulator of Notch signaling pathway involved in embryonic neurogenesis: acts by inhibiting Notch cleavage by furin, maintaining Notch in an immature inactive form, thereby promoting neurogenesis in embryos. The chain is Glutathione-specific gamma-glutamylcyclotransferase 1 from Rattus norvegicus (Rat).